The primary structure comprises 118 residues: NADH-quinone oxidoreductase subunit A 2 (118 aa).

3 consecutive transmembrane segments (helical) span residues 5–25 (YLPILVLVVIAVLFGLGSVIF), 62–82 (LIAMLFILFDIEAVFLYPWAV), and 87–107 (LGMFGLIEMGVFIVILFVGYV).

Belongs to the complex I subunit 3 family. NDH-1 is composed of 14 different subunits. Subunits NuoA, H, J, K, L, M, N constitute the membrane sector of the complex.

Its subcellular location is the cell inner membrane. The enzyme catalyses a quinone + NADH + 5 H(+)(in) = a quinol + NAD(+) + 4 H(+)(out). In terms of biological role, NDH-1 shuttles electrons from NADH, via FMN and iron-sulfur (Fe-S) centers, to quinones in the respiratory chain. The immediate electron acceptor for the enzyme in this species is believed to be ubiquinone. Couples the redox reaction to proton translocation (for every two electrons transferred, four hydrogen ions are translocated across the cytoplasmic membrane), and thus conserves the redox energy in a proton gradient. The protein is NADH-quinone oxidoreductase subunit A 2 of Citrifermentans bemidjiense (strain ATCC BAA-1014 / DSM 16622 / JCM 12645 / Bem) (Geobacter bemidjiensis).